A 582-amino-acid chain; its full sequence is Vesicular glutamate transporter 2 (582 aa).

At 1–71 (MESVKQRILA…CTCFGLPRRY (71 aa)) the chain is on the cytoplasmic side. A helical transmembrane segment spans residues 72 to 92 (IIAIMSGLGFCISFGIRCNLG). At 93-125 (VAIVDMVNNSTIHRGGKVIKEKAKFNWDPETVG) the chain is on the vesicular side. 2 N-linked (GlcNAc...) asparagine glycosylation sites follow: asparagine 100 and asparagine 101. Residues 126–146 (MIHGSFFWGYIITQIPGGYIA) form a helical membrane-spanning segment. The Cytoplasmic portion of the chain corresponds to 147-148 (SR). The helical transmembrane segment at 149–169 (LAANRVFGAAILLTSTLNMLI) threads the bilayer. Residues 170-177 (PSAARVHY) lie on the Vesicular side of the membrane. Residues 178 to 198 (GCVIFVRILQGLVEGVTYPAC) traverse the membrane as a helical segment. Topologically, residues 199-216 (HGIWSKWAPPLERSRLAT) are cytoplasmic. Residues 217 to 237 (TSFCGSYAGAVIAMPLAGILV) traverse the membrane as a helical segment. At 238–244 (QYTGWSS) the chain is on the vesicular side. The chain crosses the membrane as a helical span at residues 245 to 265 (VFYVYGSFGMVWYMFWLLVSY). The Cytoplasmic segment spans residues 266 to 310 (ESPAKHPTITDEERRYIEESIGESANLLGAMEKFKTPWRKFFTSM). A helical membrane pass occupies residues 311–331 (PVYAIIVANFCRSWTFYLLLI). Topologically, residues 332–349 (SQPAYFEEVFGFEISKVG) are vesicular. The chain crosses the membrane as a helical span at residues 350-370 (MLSAVPHLVMTIIVPIGGQIA). Over 371–386 (DFLRSKQILSTTTVRK) the chain is Cytoplasmic. A helical membrane pass occupies residues 387 to 407 (IMNCGGFGMEATLLLVVGYSH). Residues 408-409 (TR) are Vesicular-facing. Residues 410 to 430 (GVAISFLVLAVGFSGFAISGF) form a helical membrane-spanning segment. The Cytoplasmic segment spans residues 431–443 (NVNHLDIAPRYAS). A helical transmembrane segment spans residues 444–464 (ILMGISNGVGTLSGMVCPIIV). The Vesicular portion of the chain corresponds to 465 to 477 (GAMTKNKSREEWQ). The N-linked (GlcNAc...) asparagine glycan is linked to asparagine 470. Residues 478 to 498 (YVFLIAALVHYGGVIFYAIFA) form a helical membrane-spanning segment. Residues 499 to 582 (SGEKQPWADP…HSYKDRVDYS (84 aa)) lie on the Cytoplasmic side of the membrane.

This sequence belongs to the major facilitator superfamily. Sodium/anion cotransporter family. VGLUT subfamily. Predominantly expressed in adult brain. Expressed in amygdala, caudate nucleus, cerebral cortex, frontal lobe, hippocampus, medulla, occipital lobe, putamen, spinal cord, substantia nigra, subthalamic nucleus, temporal lobe and thalamus.

The protein localises to the cytoplasmic vesicle. Its subcellular location is the secretory vesicle. It is found in the synaptic vesicle membrane. The protein resides in the synapse. It localises to the synaptosome. The protein localises to the cell membrane. It catalyses the reaction L-glutamate(out) = L-glutamate(in). It carries out the reaction 3 Na(+)(out) + phosphate(out) = 3 Na(+)(in) + phosphate(in). The enzyme catalyses phosphate(in) = phosphate(out). The catalysed reaction is K(+)(in) + H(+)(out) = K(+)(out) + H(+)(in). It catalyses the reaction chloride(in) = chloride(out). Its activity is regulated as follows. Chloride channel activity is allosterically activated by lumenal H(+) and Cl(-) leading to synaptic vesicles acidification. The L-glutamate transport activity is allosterically activated by lumenal H(+) and Cl(-). The allosteric requirement for H(+) efficiently prevents non-vesicular efflux across the plasma membrane. The L-glutamate uniporter activity exhibits a biphasic dependence on chloride concentration. Multifunctional transporter that transports L-glutamate as well as multiple ions such as chloride, proton, potassium, sodium and phosphate. At the synaptic vesicle membrane, mainly functions as a uniporter which transports preferentially L-glutamate but also, phosphate from the cytoplasm into synaptic vesicles at presynaptic nerve terminals of excitatory neural cells. The L-glutamate or phosphate uniporter activity is electrogenic and is driven by the proton electrochemical gradient, mainly by the electrical gradient established by the vacuolar H(+)-ATPase across the synaptic vesicle membrane. In addition, functions as a chloride channel that allows the chloride permeation through the synaptic vesicle membrane therefore affects the proton electrochemical gradient and promotes synaptic vesicles acidification. Moreover, functions as a vesicular K(+)/H(+) antiport allowing to maintain the electrical gradient and to decrease chemical gradient and therefore sustain vesicular glutamate uptake. The vesicular H(+)/H(+) antiport activity is electroneutral. At the plasma membrane, following exocytosis, functions as a symporter of Na(+) and phosphate from the extracellular space to the cytoplasm allowing synaptic phosphate homeostasis regulation. The symporter activity is driven by an inside negative membrane potential and is electrogenic. Also involved in the regulation of retinal hyaloid vessel regression during postnatal development. May also play a role in the endocrine glutamatergic system of other tissues such as pineal gland and pancreas. In Homo sapiens (Human), this protein is Vesicular glutamate transporter 2.